Consider the following 261-residue polypeptide: Indole-3-glycerol phosphate synthase (261 aa).

Belongs to the TrpC family.

The catalysed reaction is 1-(2-carboxyphenylamino)-1-deoxy-D-ribulose 5-phosphate + H(+) = (1S,2R)-1-C-(indol-3-yl)glycerol 3-phosphate + CO2 + H2O. Its pathway is amino-acid biosynthesis; L-tryptophan biosynthesis; L-tryptophan from chorismate: step 4/5. The chain is Indole-3-glycerol phosphate synthase from Burkholderia cenocepacia (strain HI2424).